A 594-amino-acid chain; its full sequence is UvrABC system protein C (594 aa).

A GIY-YIG domain is found at 13–99; it reads NSSGVYQYFD…IKQLKPKYNI (87 aa). Residues 205–240 form the UVR domain; that stretch reads DRLIKELELKMERLSSNLRFEEALIYRDRIAKIQKI.

It belongs to the UvrC family. Interacts with UvrB in an incision complex.

The protein localises to the cytoplasm. Functionally, the UvrABC repair system catalyzes the recognition and processing of DNA lesions. UvrC both incises the 5' and 3' sides of the lesion. The N-terminal half is responsible for the 3' incision and the C-terminal half is responsible for the 5' incision. The polypeptide is UvrABC system protein C (Helicobacter pylori (strain G27)).